The chain runs to 462 residues: MSSRSPKDLIKSKWGSRPSSSKSDTALEKFKGEIAAFKTSLDEITNGKGKVANKDRSKLLEKIQVLEAEREKNVYYLMEKDKEIQRLKDHLRSRYSSSSLLEQLEEKTKECEKKQQLLESLSRETDILKKQLSATTKRLSELESKASTLHLSQSVPANCFNSSMNSIHEKEMQLKDALEKNQQWLVYDQQREAYVKGLLAKIFELEKRTETAAASLPQQMKKTESEGYLQEEKQKYDHLLENAKKDLEVERQTVTQLRLELDEFRRKYEETQKEVEDLNQLLSSQRKADIQHLEEDKHKTEKIQKLREESSVFKGKLEEERKKSEELLSQVRILYDSLLKHQEEQSRVALLERQMQACTLDFENEKLDRQNMQHQLYVILKELRKAKSQITQLESLKQLHGFTFTEQPFPLQGEPENRVKATSPKSPTAVLNESLVECPKCSVQYPATEHRDLLVHVEYCMK.

A compositionally biased stretch (basic and acidic residues) spans 1–11 (MSSRSPKDLIK). The interval 1 to 25 (MSSRSPKDLIKSKWGSRPSSSKSDT) is disordered. Residues 12–23 (SKWGSRPSSSKS) are compositionally biased toward low complexity. Coiled coils occupy residues 50 to 185 (KVAN…QQWL) and 228 to 400 (YLQE…KQLH). A phosphoserine mark is found at serine 96 and serine 99. The segment at 157 to 235 (ANCFNSSMNS…EGYLQEEKQK (79 aa)) is interaction with TSG101. The interval 160–214 (FNSSMNSIHEKEMQLKDALEKNQQWLVYDQQREAYVKGLLAKIFELEKRTETAAA) is interaction with PDCD6IP. The tract at residues 354-462 (QMQACTLDFE…LLVHVEYCMK (109 aa)) is required for localization to the interphase centrosome and to the midbody during cytokinesis. Phosphoserine is present on residues serine 423 and serine 426. A Phosphothreonine modification is found at threonine 428. Phosphoserine; by PLK1 is present on serine 434.

Homodimer. Interacts (phosphorylated on Ser-423 and Ser-426) with PLK1; the interaction is indirect via the MTMR3:MTMR4 heterooligomer, occurs during early mitosis, regulates the phosphorylation of CEP55 by PLK1 and its recruitment to the midbody where it can mediate cell abscission. Interacts with AKAP9/CG-NAP; the interaction occurs in interphase and is lost upon mitotic entry. Interacts with PCNT/Kendrin; the interaction occurs in interphase and is lost upon mitotic entry. Directly interacts with PDCD6IP; this interaction is required for PDCD6IP targeting to the midbody; CEP55 binds PDCD6IP in a 2:1 stoichiometry; PDCD6IP competes with TSG101 for the same binding site. Interacts with TSG101; TSG101 competes with PDCD6IP for the same binding site; interaction is required for cytokinesis. Interacts with MVB12A, VPS37B, VPS37C and VPS28. In terms of processing, there is a hierachy of phosphorylation, where both Ser-423 and Ser-426 are phosphorylated at the onset of mitosis, prior to Ser-434. Phosphorylation at Ser-423 and Ser-426 is required for dissociation from the centrosome at the G2/M boundary. Phosphorylation at the 3 sites, Ser-423, Ser-426 and Ser-434, is required for protein function at the final stages of cell division to complete cytokinesis successfully.

The protein resides in the cytoplasm. The protein localises to the cytoskeleton. It is found in the microtubule organizing center. Its subcellular location is the centrosome. It localises to the centriole. The protein resides in the cleavage furrow. The protein localises to the midbody. It is found in the midbody ring. Its function is as follows. Plays a role in mitotic exit and cytokinesis. Recruits PDCD6IP and TSG101 to midbody during cytokinesis. Required for successful completion of cytokinesis. Not required for microtubule nucleation. Plays a role in the development of the brain and kidney. In Rattus norvegicus (Rat), this protein is Centrosomal protein of 55 kDa.